We begin with the raw amino-acid sequence, 670 residues long: Histone-lysine N-methyltransferase, H3 lysine-9 specific SUVH1 (670 aa).

Residues 53 to 140 are disordered; sequence YPFSSSQANQ…RPISRPENMN (88 aa). Low complexity predominate over residues 68–79; the sequence is NQAQYPPQHQQP. Over residues 123-133 the composition is skewed to basic residues; it reads VKRRIPKKRPI. The region spanning 211-357 is the YDG domain; it reads GIVPGVEIGD…HNTFKYKLVR (147 aa). The Pre-SET domain maps to 432 to 492; it reads FGCDCANLCK…TCKNKVTQMG (61 aa). Zn(2+) contacts are provided by Cys-434, Cys-436, Cys-440, Cys-447, Cys-449, Cys-475, Cys-479, Cys-481, and Cys-484. The SET domain maps to 495 to 639; the sequence is VRLEVFKTAN…PMTELTYDYG (145 aa). S-adenosyl-L-methionine-binding positions include 505-507, Asp-541, Tyr-543, Arg-593, and 596-597; these read RGW and NH. Zn(2+) is bound by residues Cys-599, Cys-658, Cys-660, and Cys-665. In terms of domain architecture, Post-SET spans 654–670; it reads GKRKCFCGSAYCRGSFG.

Belongs to the class V-like SAM-binding methyltransferase superfamily. Histone-lysine methyltransferase family. Suvar3-9 subfamily. In terms of tissue distribution, expressed in leaves stems and flowers.

The protein localises to the nucleus. It is found in the chromosome. It localises to the centromere. It carries out the reaction L-lysyl(9)-[histone H3] + 2 S-adenosyl-L-methionine = N(6),N(6)-dimethyl-L-lysyl(9)-[histone H3] + 2 S-adenosyl-L-homocysteine + 2 H(+). Histone methyltransferase. Methylates 'Lys-9' of histone H3. H3 'Lys-9' methylation represents a specific tag for epigenetic transcriptional repression. This chain is Histone-lysine N-methyltransferase, H3 lysine-9 specific SUVH1 (SUVH1), found in Arabidopsis thaliana (Mouse-ear cress).